The chain runs to 1386 residues: DNA-directed RNA polymerase subunit beta (1386 aa).

The protein belongs to the RNA polymerase beta chain family. The RNAP catalytic core consists of 2 alpha, 1 beta, 1 beta' and 1 omega subunit. When a sigma factor is associated with the core the holoenzyme is formed, which can initiate transcription.

The enzyme catalyses RNA(n) + a ribonucleoside 5'-triphosphate = RNA(n+1) + diphosphate. DNA-dependent RNA polymerase catalyzes the transcription of DNA into RNA using the four ribonucleoside triphosphates as substrates. The polypeptide is DNA-directed RNA polymerase subunit beta (Nitratiruptor sp. (strain SB155-2)).